A 76-amino-acid polypeptide reads, in one-letter code: Demidefensin-3 (76 aa).

The N-terminal stretch at 1-22 (MRTLALHTAMLLLVALHAQAEA) is a signal peptide. Residues 23 to 64 (RQARADEAAAQQQPGADDQGMAHSFTWPENAALPLSESERGL) constitute a propeptide that is removed on maturation. Residues 25 to 45 (ARADEAAAQQQPGADDQGMAH) are disordered. Over residues 30–44 (AAAQQQPGADDQGMA) the composition is skewed to low complexity. Cys68 and Cys73 are disulfide-bonded. A propeptide spanning residues 74–76 (RLL) is cleaved from the precursor.

It belongs to the alpha-defensin family. Theta subfamily. In terms of assembly, forms a cyclic homodimer; disulfide-linked. In terms of processing, this is a cyclic peptide.

Has antimicrobial activities against bacteria and fungi. The sequence is that of Demidefensin-3 from Macaca mulatta (Rhesus macaque).